The primary structure comprises 94 residues: ESAT-6-like protein EsxO (94 aa).

This sequence belongs to the WXG100 family. ESAT-6 subfamily. In terms of assembly, forms a complex with EsxP.

Its subcellular location is the secreted. The polypeptide is ESAT-6-like protein EsxO (Mycobacterium tuberculosis (strain CDC 1551 / Oshkosh)).